The chain runs to 335 residues: Biotin synthase (335 aa).

The region spanning 51–281 (YRVQLASLLS…RSRVRLSAGR (231 aa)) is the Radical SAM core domain. C66, C70, and C73 together coordinate [4Fe-4S] cluster. Residues C112, C144, C204, and R276 each coordinate [2Fe-2S] cluster.

Belongs to the radical SAM superfamily. Biotin synthase family. Homodimer. [4Fe-4S] cluster serves as cofactor. The cofactor is [2Fe-2S] cluster.

The enzyme catalyses (4R,5S)-dethiobiotin + (sulfur carrier)-SH + 2 reduced [2Fe-2S]-[ferredoxin] + 2 S-adenosyl-L-methionine = (sulfur carrier)-H + biotin + 2 5'-deoxyadenosine + 2 L-methionine + 2 oxidized [2Fe-2S]-[ferredoxin]. The protein operates within cofactor biosynthesis; biotin biosynthesis; biotin from 7,8-diaminononanoate: step 2/2. Its function is as follows. Catalyzes the conversion of dethiobiotin (DTB) to biotin by the insertion of a sulfur atom into dethiobiotin via a radical-based mechanism. The protein is Biotin synthase of Prochlorococcus marinus (strain MIT 9303).